A 566-amino-acid chain; its full sequence is Proline--tRNA ligase (566 aa).

This sequence belongs to the class-II aminoacyl-tRNA synthetase family. ProS type 1 subfamily. In terms of assembly, homodimer.

The protein localises to the cytoplasm. The catalysed reaction is tRNA(Pro) + L-proline + ATP = L-prolyl-tRNA(Pro) + AMP + diphosphate. In terms of biological role, catalyzes the attachment of proline to tRNA(Pro) in a two-step reaction: proline is first activated by ATP to form Pro-AMP and then transferred to the acceptor end of tRNA(Pro). As ProRS can inadvertently accommodate and process non-cognate amino acids such as alanine and cysteine, to avoid such errors it has two additional distinct editing activities against alanine. One activity is designated as 'pretransfer' editing and involves the tRNA(Pro)-independent hydrolysis of activated Ala-AMP. The other activity is designated 'posttransfer' editing and involves deacylation of mischarged Ala-tRNA(Pro). The misacylated Cys-tRNA(Pro) is not edited by ProRS. The sequence is that of Proline--tRNA ligase from Coxiella burnetii (strain RSA 493 / Nine Mile phase I).